The sequence spans 267 residues: Small ribosomal subunit protein uS3 (267 aa).

The KH type-2 domain occupies Ile-43–Lys-111. The interval Phe-216–Glu-267 is disordered. Over residues Arg-241–Glu-267 the composition is skewed to low complexity.

This sequence belongs to the universal ribosomal protein uS3 family. In terms of assembly, part of the 30S ribosomal subunit. Forms a tight complex with proteins S10 and S14.

In terms of biological role, binds the lower part of the 30S subunit head. Binds mRNA in the 70S ribosome, positioning it for translation. The polypeptide is Small ribosomal subunit protein uS3 (Bifidobacterium longum subsp. infantis (strain ATCC 15697 / DSM 20088 / JCM 1222 / NCTC 11817 / S12)).